The primary structure comprises 352 residues: Speedy protein E16 (352 aa).

The interval 1 to 90 (MDRTETRFRK…EPEKELAPEP (90 aa)) is disordered. The span at 18–40 (ITTSRQPHPQNEQSPQRSTSGYS) shows a compositional bias: polar residues. Positions 76–90 (DESEEEPEKELAPEP) are enriched in acidic residues.

Belongs to the Speedy/Ringo family.

In Homo sapiens (Human), this protein is Speedy protein E16.